The primary structure comprises 1016 residues: S-layer protein A (1016 aa).

The first 30 residues, 1 to 30 (MDLSTKKVISAGLVFIYALSLAMLVPMFLA), serve as a signal peptide directing secretion.

The protein belongs to the Sulfolobales SlaA family. The mushroom-shaped unit cells of the Sulfolobales' S-layers may consist of three SlaB subunits and six SlaA subunits.

The protein localises to the secreted. It is found in the cell wall. It localises to the S-layer. Its function is as follows. S-layer large protein. May form the highly ordered outer sheath. The chain is S-layer protein A from Acidianus ambivalens (Desulfurolobus ambivalens).